The primary structure comprises 905 residues: Transcription termination factor 1 (905 aa).

Basic and acidic residues-rich tracts occupy residues methionine 1 to aspartate 16 and isoleucine 24 to serine 33. The disordered stretch occupies residues methionine 1–serine 33. Residues methionine 1–lysine 223 are N-terminal region (NRD). Serine 65 bears the Phosphoserine mark. Residues serine 151–glutamine 443 are disordered. 2 stretches are compositionally biased toward basic residues: residues valine 163–lysine 174 and histidine 215–serine 226. Serine 240 carries the post-translational modification Phosphoserine. Threonine 248 carries the phosphothreonine modification. Composition is skewed to basic residues over residues threonine 270 to serine 283, asparagine 330 to serine 339, and threonine 385 to arginine 401. The residue at position 403 (serine 403) is a Phosphoserine. Polar residues predominate over residues proline 410–phenylalanine 419. Tyrosine 476 carries the post-translational modification Phosphotyrosine. Residues serine 478, serine 481, and serine 487 each carry the phosphoserine modification. The may be involved in interaction with ARF stretch occupies residues leucine 498 to proline 886. 2 Myb-like domains span residues aspartate 612–serine 661 and serine 661–leucine 745. Lysine 700 is covalently cross-linked (Glycyl lysine isopeptide (Lys-Gly) (interchain with G-Cter in SUMO2)). Serine 872 carries the phosphoserine modification.

In terms of assembly, oligomer. The oligomeric structure enables to interact simultaneously with two separate DNA fragments. Interacts with BAZ2A/TIP5. Interacts with CAVIN1. Interacts (via the N-terminal region (NRD) and a C-terminal region) with CDKN2A/ARF; the interaction is direct. Interacts (via C-terminal region) with NPM1/B23.

It is found in the nucleus. It localises to the nucleolus. Its subcellular location is the nucleoplasm. Multifunctional nucleolar protein that terminates ribosomal gene transcription, mediates replication fork arrest and regulates RNA polymerase I transcription on chromatin. Plays a dual role in rDNA regulation, being involved in both activation and silencing of rDNA transcription. Interaction with BAZ2A/TIP5 recovers DNA-binding activity. The chain is Transcription termination factor 1 (TTF1) from Homo sapiens (Human).